Consider the following 67-residue polypeptide: Large ribosomal subunit protein uL29 (67 aa).

The protein belongs to the universal ribosomal protein uL29 family.

The chain is Large ribosomal subunit protein uL29 from Moorella thermoacetica (strain ATCC 39073 / JCM 9320).